Here is an 805-residue protein sequence, read N- to C-terminus: Sucrose synthase (805 aa).

Positions 275–752 (MVFNVVILSP…GLKRIEEKYT (478 aa)) are GT-B glycosyltransferase.

Belongs to the glycosyltransferase 1 family. Plant sucrose synthase subfamily. In terms of tissue distribution, expression is at least 10-fold higher in tubers compared to photosynthetically active tissues.

The catalysed reaction is an NDP-alpha-D-glucose + D-fructose = a ribonucleoside 5'-diphosphate + sucrose + H(+). Its function is as follows. Sucrose-cleaving enzyme that provides UDP-glucose and fructose for various metabolic pathways. The sequence is that of Sucrose synthase from Solanum tuberosum (Potato).